Reading from the N-terminus, the 232-residue chain is 7-cyano-7-deazaguanine synthase (232 aa).

7–17 contributes to the ATP binding site; the sequence is CSGGLDSVSLA. 4 residues coordinate Zn(2+): Cys185, Cys193, Cys196, and Cys199.

This sequence belongs to the QueC family. Zn(2+) serves as cofactor.

The enzyme catalyses 7-carboxy-7-deazaguanine + NH4(+) + ATP = 7-cyano-7-deazaguanine + ADP + phosphate + H2O + H(+). It participates in purine metabolism; 7-cyano-7-deazaguanine biosynthesis. Its function is as follows. Catalyzes the ATP-dependent conversion of 7-carboxy-7-deazaguanine (CDG) to 7-cyano-7-deazaguanine (preQ(0)). In Brucella canis (strain ATCC 23365 / NCTC 10854 / RM-666), this protein is 7-cyano-7-deazaguanine synthase.